The primary structure comprises 176 residues: Inorganic pyrophosphatase (176 aa).

Substrate-binding residues include Lys31, Arg45, and Tyr57. Asp67, Asp72, and Asp104 together coordinate Mg(2+). A substrate-binding site is contributed by Tyr141.

The protein belongs to the PPase family. Homohexamer. Mg(2+) is required as a cofactor.

It is found in the cytoplasm. The catalysed reaction is diphosphate + H2O = 2 phosphate + H(+). Functionally, catalyzes the hydrolysis of inorganic pyrophosphate (PPi) forming two phosphate ions. The polypeptide is Inorganic pyrophosphatase (Methanopyrus kandleri (strain AV19 / DSM 6324 / JCM 9639 / NBRC 100938)).